Consider the following 338-residue polypeptide: 3-dehydroquinate synthase (338 aa).

NAD(+)-binding positions include D58–K63, G92–D96, T116–T117, K129, and K138. Zn(2+) is bound by residues E169, H229, and H245.

This sequence belongs to the sugar phosphate cyclases superfamily. Dehydroquinate synthase family. NAD(+) serves as cofactor. The cofactor is Co(2+). Zn(2+) is required as a cofactor.

The protein resides in the cytoplasm. It catalyses the reaction 7-phospho-2-dehydro-3-deoxy-D-arabino-heptonate = 3-dehydroquinate + phosphate. It functions in the pathway metabolic intermediate biosynthesis; chorismate biosynthesis; chorismate from D-erythrose 4-phosphate and phosphoenolpyruvate: step 2/7. Catalyzes the conversion of 3-deoxy-D-arabino-heptulosonate 7-phosphate (DAHP) to dehydroquinate (DHQ). In Picrophilus torridus (strain ATCC 700027 / DSM 9790 / JCM 10055 / NBRC 100828 / KAW 2/3), this protein is 3-dehydroquinate synthase.